A 313-amino-acid chain; its full sequence is Olfactory receptor 56A4 (313 aa).

The Extracellular segment spans residues 1–28; that stretch reads MASPSNDSTAPVSEFLLICFPNFQSWQH. N-linked (GlcNAc...) asparagine glycosylation occurs at N6. The helical transmembrane segment at 29 to 49 threads the bilayer; that stretch reads WLSLPLSLLFLLAMGANTTLL. At 50–57 the chain is on the cytoplasmic side; that stretch reads ITIQLEAS. The chain crosses the membrane as a helical span at residues 58-78; it reads LHQPLYYLLSLLSLLDIVLCL. The Extracellular portion of the chain corresponds to 79-102; that stretch reads TVIPKVLAIFWFDLRSISFPACFL. A disulfide bond links C100 and C192. The helical transmembrane segment at 103 to 123 threads the bilayer; that stretch reads QMFIMNSFLTMESCTFMVMAY. Residues 124 to 142 are Cytoplasmic-facing; that stretch reads DRYVAICHPLRYPSIITDQ. Residues 143 to 163 form a helical membrane-spanning segment; it reads FVARAVVFVIARNAFVSLPVP. Over 164-199 the chain is Extracellular; it reads MLSARLRYCAGNIIKNCICSNLSVSKLSCDDITFNQ. N-linked (GlcNAc...) asparagine glycosylation is present at N184. The chain crosses the membrane as a helical span at residues 200 to 220; sequence LYQFVAGWTLLGSDLILIVIS. At 221–240 the chain is on the cytoplasmic side; the sequence is YSFILKVVLRIKAEGAVAKA. Residues 241-261 form a helical membrane-spanning segment; it reads LSTCGSHFILILFFSTVLLVL. The Extracellular segment spans residues 262–276; that stretch reads VITNLARKRIPPDVP. A helical membrane pass occupies residues 277 to 297; it reads ILLNILHHLIPPALNPIVYGV. At 298–313 the chain is on the cytoplasmic side; that stretch reads RTKEIKQGIQNLLKRL.

Belongs to the G-protein coupled receptor 1 family.

It is found in the cell membrane. Odorant receptor. This chain is Olfactory receptor 56A4 (OR56A4), found in Homo sapiens (Human).